The following is a 64-amino-acid chain: Small ribosomal subunit protein eS17 (64 aa).

It belongs to the eukaryotic ribosomal protein eS17 family.

This is Small ribosomal subunit protein eS17 from Methanospirillum hungatei JF-1 (strain ATCC 27890 / DSM 864 / NBRC 100397 / JF-1).